The following is a 248-amino-acid chain: Probable phosphatase VFMJ11_A0899 (248 aa).

Positions 8, 10, 16, 41, 74, 101, 131, 193, and 195 each coordinate Zn(2+).

Belongs to the PHP family. The cofactor is Zn(2+).

The chain is Probable phosphatase VFMJ11_A0899 from Aliivibrio fischeri (strain MJ11) (Vibrio fischeri).